Here is a 239-residue protein sequence, read N- to C-terminus: Regulator of G-protein signaling 20 (239 aa).

The tract at residues 1–29 (MRTANGGPRARASPSASPADPGLPEGSER) is disordered. A compositionally biased stretch (low complexity) spans 8–19 (PRARASPSASPA). An RGS domain is found at 113–229 (SFDNLMVTPA…MNSTVYKDLL (117 aa)).

In terms of assembly, forms a complex with G(alpha)z/i2 subunits and mu-opioid receptors; the formation of this complex results in mu-opioid receptor desensitization. Interacts with OPRM1. In terms of processing, fatty acylated. Heavily palmitoylated in the cysteine string motif. Post-translationally, N- and O-glycosylated in synapsomal membranes. Serine phosphorylated in synapsomal membranes. In terms of processing, sumoylated with SUMO1, SUMO2 and SUMO3. Sumoylation increases binding to the G-proteins, G(alpha)-i2 and G(z), and interaction with mu-opioid receptors.

It is found in the membrane. The protein resides in the nucleus. It localises to the cytoplasm. Inhibits signal transduction by increasing the GTPase activity of G protein alpha subunits thereby driving them into their inactive GDP-bound form. Binds selectively to G(z)-alpha and G(alpha)-i2 subunits, accelerates their GTPase activity and regulates their signaling activities. The G(z)-alpha activity is inhibited by the phosphorylation and palmitoylation of the G-protein. Negatively regulates mu-opioid receptor-mediated activation of the G-proteins. The chain is Regulator of G-protein signaling 20 (Rgs20) from Mus musculus (Mouse).